We begin with the raw amino-acid sequence, 276 residues long: Undecaprenyl-diphosphatase (276 aa).

The next 8 membrane-spanning stretches (helical) occupy residues 1–21, 39–59, 84–104, 115–135, 159–179, 190–210, 222–242, and 253–273; these read MSWL…FLPV, AGAS…LVYF, YWLG…GLLF, LWLV…AEYA, LALV…LFLG, FLLA…DAFA, QLLV…AWFL, and FVGY…TGVV.

It belongs to the UppP family.

It is found in the cell membrane. The catalysed reaction is di-trans,octa-cis-undecaprenyl diphosphate + H2O = di-trans,octa-cis-undecaprenyl phosphate + phosphate + H(+). In terms of biological role, catalyzes the dephosphorylation of undecaprenyl diphosphate (UPP). Confers resistance to bacitracin. The protein is Undecaprenyl-diphosphatase of Mycolicibacterium gilvum (strain PYR-GCK) (Mycobacterium gilvum (strain PYR-GCK)).